Consider the following 290-residue polypeptide: Translin-associated protein X (290 aa).

The tract at residues 1-32 (MSNKEGSGGFRKRKHDNFPHNQRREGKDVNSS) is disordered. Residues 16–28 (DNFPHNQRREGKD) are compositionally biased toward basic and acidic residues. The segment at 73–208 (LLHRITSAPD…MRMCINSVGN (136 aa)) is interaction with C1D. 2 residues coordinate Mg(2+): Glu129 and Glu197. Lys279 participates in a covalent cross-link: Glycyl lysine isopeptide (Lys-Gly) (interchain with G-Cter in SUMO2).

The protein belongs to the translin family. Ring-shaped heterooctamer of six TSN and two TSNAX subunits. Interacts with GOLGA3, TSNAXIP1, SUN1 and AKAP9. Interacts with the homodimeric form of C1D following gamma-radiation. Interacts with TSN and C1D in a mutually exclusive manner. In terms of processing, sumoylated with SUMO1.

It is found in the cytoplasm. It localises to the perinuclear region. The protein localises to the golgi apparatus. Its subcellular location is the nucleus. Acts in combination with TSN as an endonuclease involved in the activation of the RNA-induced silencing complex (RISC). Possible role in spermatogenesis. The sequence is that of Translin-associated protein X (TSNAX) from Pongo abelii (Sumatran orangutan).